Here is a 519-residue protein sequence, read N- to C-terminus: Cell division cycle protein 20 homolog B (519 aa).

A compositionally biased stretch (polar residues) spans 79–98 (QSQTRALSSDSFGEEQSTTY). Residues 79 to 133 (QSQTRALSSDSFGEEQSTTYLPEASGSVLKTPPEKETLTLGSRKEQLKTPSKGIS) are disordered. A compositionally biased stretch (basic and acidic residues) spans 110 to 125 (PPEKETLTLGSRKEQL). WD repeat units follow at residues 229-266 (RNDY…GIEN), 271-310 (LTCN…RLRN), 311-341 (MLGH…YHHD), 353-392 (RHKQ…SAQG), 399-441 (TQST…SIQT), 443-484 (STNS…RSGG), and 487-519 (GHRG…WNCY).

This sequence belongs to the WD repeat CDC20/Fizzy family. Expressed in multiciliated cells (MCCs).

Its subcellular location is the cytoplasm. Its function is as follows. Protein regulator of centriole-deuterosome disengagement and subsequently participates in the ciliogenesis in multiciliated cells (MCCs). This is Cell division cycle protein 20 homolog B from Homo sapiens (Human).